The primary structure comprises 629 residues: Chaperone protein HtpG (629 aa).

An a; substrate-binding region spans residues 1 to 343 (MQKQTLSFQA…SSDLPLNVSR (343 aa)). The tract at residues 344 to 558 (ELLQESRAVK…DGDMSTQLAR (215 aa)) is b. The tract at residues 559–629 (MLKQAGQTVP…YVRRVNALLV (71 aa)) is c.

Belongs to the heat shock protein 90 family. As to quaternary structure, homodimer.

Its subcellular location is the cytoplasm. Functionally, molecular chaperone. Has ATPase activity. The sequence is that of Chaperone protein HtpG from Polaromonas naphthalenivorans (strain CJ2).